Reading from the N-terminus, the 882-residue chain is DNA mismatch repair protein MutS (882 aa).

627–634 (GPNMAGKS) is an ATP binding site.

This sequence belongs to the DNA mismatch repair MutS family.

This protein is involved in the repair of mismatches in DNA. It is possible that it carries out the mismatch recognition step. This protein has a weak ATPase activity. This chain is DNA mismatch repair protein MutS, found in Anaeromyxobacter dehalogenans (strain 2CP-1 / ATCC BAA-258).